The sequence spans 312 residues: Ribosomal RNA small subunit methyltransferase H (312 aa).

Positions 1-24 (MNIMTANQGAVSPSQTESEASPPT) are disordered. S-adenosyl-L-methionine contacts are provided by residues 55 to 57 (AGH), Asp72, Tyr96, Asp117, and Gln124. The tract at residues 288 to 312 (EQVDNPRARSAKLRVGERAAAPEGS) is disordered.

This sequence belongs to the methyltransferase superfamily. RsmH family.

It localises to the cytoplasm. The enzyme catalyses cytidine(1402) in 16S rRNA + S-adenosyl-L-methionine = N(4)-methylcytidine(1402) in 16S rRNA + S-adenosyl-L-homocysteine + H(+). Functionally, specifically methylates the N4 position of cytidine in position 1402 (C1402) of 16S rRNA. The sequence is that of Ribosomal RNA small subunit methyltransferase H from Deinococcus radiodurans (strain ATCC 13939 / DSM 20539 / JCM 16871 / CCUG 27074 / LMG 4051 / NBRC 15346 / NCIMB 9279 / VKM B-1422 / R1).